A 423-amino-acid polypeptide reads, in one-letter code: Gamma-glutamyl phosphate reductase (423 aa).

Positions 1-14 are enriched in low complexity; it reads MTLQAAPRSAAAQQ. The segment at 1–25 is disordered; the sequence is MTLQAAPRSAAAQQREPDLRQEVHD. The segment covering 15–25 has biased composition (basic and acidic residues); that stretch reads REPDLRQEVHD.

This sequence belongs to the gamma-glutamyl phosphate reductase family.

The protein localises to the cytoplasm. It catalyses the reaction L-glutamate 5-semialdehyde + phosphate + NADP(+) = L-glutamyl 5-phosphate + NADPH + H(+). It functions in the pathway amino-acid biosynthesis; L-proline biosynthesis; L-glutamate 5-semialdehyde from L-glutamate: step 2/2. Its function is as follows. Catalyzes the NADPH-dependent reduction of L-glutamate 5-phosphate into L-glutamate 5-semialdehyde and phosphate. The product spontaneously undergoes cyclization to form 1-pyrroline-5-carboxylate. The protein is Gamma-glutamyl phosphate reductase of Mycobacterium marinum (strain ATCC BAA-535 / M).